A 193-amino-acid chain; its full sequence is Large ribosomal subunit protein uL5 (193 aa).

It belongs to the universal ribosomal protein uL5 family. As to quaternary structure, part of the 50S ribosomal subunit; part of the 5S rRNA/L5/L18/L25 subcomplex. Contacts the 5S rRNA and the P site tRNA. Forms a bridge to the 30S subunit in the 70S ribosome.

In terms of biological role, this is one of the proteins that bind and probably mediate the attachment of the 5S RNA into the large ribosomal subunit, where it forms part of the central protuberance. In the 70S ribosome it contacts protein S13 of the 30S subunit (bridge B1b), connecting the 2 subunits; this bridge is implicated in subunit movement. Contacts the P site tRNA; the 5S rRNA and some of its associated proteins might help stabilize positioning of ribosome-bound tRNAs. This chain is Large ribosomal subunit protein uL5, found in Pseudarthrobacter chlorophenolicus (strain ATCC 700700 / DSM 12829 / CIP 107037 / JCM 12360 / KCTC 9906 / NCIMB 13794 / A6) (Arthrobacter chlorophenolicus).